Consider the following 673-residue polypeptide: RAS guanyl-releasing protein 4 (673 aa).

2 stretches are compositionally biased toward basic residues: residues 1–10 and 20–32; these read MNRKDIKRKS and GRGRSRQARRHKT. Disordered regions lie at residues 1-34 and 164-188; these read MNRKDIKRKSHQECSGKAGGRGRSRQARRHKTCP and LGDASSLLSPGGPGPPPPMSSPGLG. The N-terminal Ras-GEF domain occupies 49-175; it reads GVLSESSCSE…DASSLLSPGG (127 aa). Over residues 164 to 173 the composition is skewed to low complexity; sequence LGDASSLLSP. The region spanning 201–432 is the Ras-GEF domain; it reads ETEELAQHLT…YELSYAREPR (232 aa). Residues 466 to 501 enclose the EF-hand domain; sequence HVEQLVESVFKNYDPEGRGSISLEDFERLSGNFPFA. The segment at 540-590 adopts a Phorbol-ester/DAG-type zinc-finger fold; it reads LHAFQEVTFRKPTFCHSCSGFLWGVTKQGYRCRDCGLCCHRHCRDQVRVEC. The disordered stretch occupies residues 592-633; sequence KRPETKGDPGPPGAPVPATSLPPANCGSEESLSYTLSPDPES.

This sequence belongs to the RASGRP family. In terms of tissue distribution, expressed by mast cells and their progenitors (at protein level). Expressed by dendritic cells. As to expression, expressed in neutrophils.

The protein resides in the cytoplasm. The protein localises to the cell membrane. Its function is as follows. Functions as a cation- and diacylglycerol (DAG)-regulated nucleotide exchange factor activating Ras through the exchange of bound GDP for GTP. In neutrophils, participates in a phospholipase C-activating N-formyl peptide-activated GPCR (G protein-coupled receptor) signaling pathway by promoting Ras-mediated activation of PIK3CG/PI3Kgamma to promote neutrophil functional responses. In CD117(+) dendritic cells and mast cells, participates in an lipopolysaccharide (LPS)-activated signaling pathway that stimulates the production of interferon-gamma and other pro-inflammatory cytokines by natural killer (NK) cells. May function in mast cell differentiation. Does not appear to be required for the development of B-cells, DC-cells, T-cells, or NK-cells. Functionally, binds diacylglycerol (DAG). In terms of biological role, unable to bind diacylglycerol (DAG). The chain is RAS guanyl-releasing protein 4 (Rasgrp4) from Mus musculus (Mouse).